A 977-amino-acid polypeptide reads, in one-letter code: Receptor protein-tyrosine kinase CEPR2 (977 aa).

An N-terminal signal peptide occupies residues 1–31 (MSRRPDLLRGSVVATVAATFLLFIFPPNVES). At 32 to 620 (TVEKQALFRF…NVKRNSSLDG (589 aa)) the chain is on the extracellular side. Asn85 carries an N-linked (GlcNAc...) asparagine glycan. 20 LRR repeats span residues 97–121 (LTKLSTLSLPSNFISGRIPPEIVNC), 122–146 (KNLKVLNLTSNRLSGTIPNLSPLKS), 148–167 (EILDISGNFLNGEFQSWIGN), 168–192 (MNQLVSLGLGNNHYEEGIIPESIGG), 193–217 (LKKLTWLFLARSNLTGKIPNSIFDL), 219–241 (ALDTFDIANNAISDDFPILISRL), 242–265 (VNLTKIELFNNSLTGKIPPEIKNL), 266–288 (TRLREFDISSNQLSGVLPEELGV), 290–312 (KELRVFHCHENNFTGEFPSGFGD), 313–338 (LSHLTSLSIYRNNFSGEFPVNIGRFS), 340–361 (LDTVDISENEFTGPFPRFLCQN), 363–385 (KLQFLLALQNEFSGEIPRSYGEC), 386–409 (KSLLRLRINNNRLSGQVVEGFWSL), 411–433 (LAKMIDLSDNELTGEVSPQIGLS), 434–457 (TELSQLILQNNRFSGKIPRELGRL), 458–481 (TNIERIYLSNNNLSGEIPMEVGDL), 482–504 (KELSSLHLENNSLTGFIPKELKN), 506–529 (VKLVDLNLAKNFLTGEIPNSLSQI), 530–553 (ASLNSLDFSGNRLTGEIPASLVKL), and 555–576 (LSFIDLSGNQLSGRIPPDLLAV). The N-linked (GlcNAc...) asparagine glycan is linked to Asn128. The N-linked (GlcNAc...) asparagine glycan is linked to Asn205. N-linked (GlcNAc...) asparagine glycosylation is found at Asn243, Asn251, and Asn264. 2 N-linked (GlcNAc...) asparagine glycosylation sites follow: Asn301 and Asn325. N-linked (GlcNAc...) asparagine glycans are attached at residues Asn469 and Asn491. Asn615 is a glycosylation site (N-linked (GlcNAc...) asparagine). The helical transmembrane segment at 621-641 (TLLFLALAIVVVVLVSGLFAL) threads the bilayer. The Cytoplasmic portion of the chain corresponds to 642 to 977 (RYRVVKIREL…SQDTTGKITV (336 aa)). In terms of domain architecture, Protein kinase spans 683 to 965 (LDEDHVIGSG…RKLDDADPCV (283 aa)). ATP is bound by residues 689–697 (IGSGSAGKV) and Lys712. Tyr801 is subject to Phosphotyrosine. Catalysis depends on Asp814, which acts as the Proton acceptor. Position 846 is a phosphoserine (Ser846). Phosphotyrosine occurs at positions 854 and 861.

This sequence belongs to the protein kinase superfamily. Ser/Thr protein kinase family. As to quaternary structure, interacts with the root-derived peptide CEP1. Binds to the ammonium transporter AMT1-1. Expressed in mature leaves, primary roots, and the root tips of both primary and lateral roots.

It localises to the cell membrane. It carries out the reaction L-tyrosyl-[protein] + ATP = O-phospho-L-tyrosyl-[protein] + ADP + H(+). Receptor kinase involved in the perception of C-terminally encoded plant signaling peptide (CEP) and subsequent regulation of root and shoot development. Together with CEPR1, mediates systemic nitrogen (N)-demand signaling upon the perception of root-derived peptides (e.g. CEP1) via the up-regulation of genes involved in N uptake and assimilation pathways. The chain is Receptor protein-tyrosine kinase CEPR2 from Arabidopsis thaliana (Mouse-ear cress).